The following is a 309-amino-acid chain: Palmitoyltransferase ZDHHC19 (309 aa).

The next 2 membrane-spanning stretches (helical) occupy residues 29–49 (LFAA…FAFP) and 59–79 (WAFP…LVSL). Residues 112–162 (QWCPKCCFHRPPRTYHCPWCNICVEDFDHHCKWVNNCIGHRNFRFFMLLVL) enclose the DHHC domain. C142 functions as the S-palmitoyl cysteine intermediate in the catalytic mechanism. The next 2 membrane-spanning stretches (helical) occupy residues 160–180 (LVLS…IFLV) and 193–213 (IAIV…LLLL). The segment covering 280 to 294 (LHPPMSPSALNPPAP) has biased composition (pro residues). A disordered region spans residues 280–309 (LHPPMSPSALNPPAPTSGSLQSREGTPGAW).

Belongs to the DHHC palmitoyltransferase family.

It is found in the golgi apparatus membrane. The protein localises to the cytoplasm. The protein resides in the perinuclear region. It catalyses the reaction L-cysteinyl-[protein] + hexadecanoyl-CoA = S-hexadecanoyl-L-cysteinyl-[protein] + CoA. Palmitoyltransferase that mediates palmitoylation oproteins, such as RRAS and SQSTM1. Catalyzes palmitoylation of RRAS, leading to increased cell viability. Acts as a positive regulator of autophagy by mediating palmitoylation of SQSTM1, promoting affinity between SQSTM1 and ATG8 proteins and recruitment of ubiquitinated cargo proteins to autophagosomes. In terms of biological role, (Microbial infection) Promotes Chikungunya virus (CHIKV) replication by mediating viral nsp1 palmitoylation. In Homo sapiens (Human), this protein is Palmitoyltransferase ZDHHC19.